Reading from the N-terminus, the 240-residue chain is Phosphatidylserine decarboxylase proenzyme (240 aa).

Ser-209 acts as the Schiff-base intermediate with substrate; via pyruvic acid in catalysis. Ser-209 is modified (pyruvic acid (Ser); by autocatalysis).

It belongs to the phosphatidylserine decarboxylase family. PSD-A subfamily. In terms of assembly, heterodimer of a large membrane-associated beta subunit and a small pyruvoyl-containing alpha subunit. Pyruvate is required as a cofactor. In terms of processing, is synthesized initially as an inactive proenzyme. Formation of the active enzyme involves a self-maturation process in which the active site pyruvoyl group is generated from an internal serine residue via an autocatalytic post-translational modification. Two non-identical subunits are generated from the proenzyme in this reaction, and the pyruvate is formed at the N-terminus of the alpha chain, which is derived from the carboxyl end of the proenzyme. The post-translation cleavage follows an unusual pathway, termed non-hydrolytic serinolysis, in which the side chain hydroxyl group of the serine supplies its oxygen atom to form the C-terminus of the beta chain, while the remainder of the serine residue undergoes an oxidative deamination to produce ammonia and the pyruvoyl prosthetic group on the alpha chain.

Its subcellular location is the cell membrane. It catalyses the reaction a 1,2-diacyl-sn-glycero-3-phospho-L-serine + H(+) = a 1,2-diacyl-sn-glycero-3-phosphoethanolamine + CO2. The protein operates within phospholipid metabolism; phosphatidylethanolamine biosynthesis; phosphatidylethanolamine from CDP-diacylglycerol: step 2/2. Its function is as follows. Catalyzes the formation of phosphatidylethanolamine (PtdEtn) from phosphatidylserine (PtdSer). The chain is Phosphatidylserine decarboxylase proenzyme from Mycobacterium avium (strain 104).